Consider the following 260-residue polypeptide: Carbonic anhydrase 3 (260 aa).

Ala-2 carries the N-acetylalanine modification. An Alpha-carbonic anhydrase domain is found at 3–259 (KEWGYASHNG…VKGRVVRASF (257 aa)). Phosphoserine occurs at positions 29, 43, 48, 50, and 55. The segment at 64–67 (KTCR) is involved in proton transfer. At Thr-73 the chain carries Phosphothreonine. The Zn(2+) site is built by His-94, His-96, and His-119. At Tyr-127 the chain carries Phosphotyrosine. Phosphothreonine occurs at positions 129 and 176. Residues Cys-182 and Cys-187 each carry the S-glutathionyl cysteine modification. 198–199 (TT) is a substrate binding site. Thr-216 carries the phosphothreonine modification. Position 219 is a phosphoserine (Ser-219).

This sequence belongs to the alpha-carbonic anhydrase family. Requires Zn(2+) as cofactor. Post-translationally, S-thiolated both by thiol-disulfide exchange with glutathione disulfide and by oxyradical-initiated S-thiolation with reduced glutathione. S-glutathionylated in hepatocytes under oxidative stress. In terms of tissue distribution, expressed at lower levels in adipose tissue from animals that were either genetically obese or had experimentally induced obesity.

The protein localises to the cytoplasm. The catalysed reaction is hydrogencarbonate + H(+) = CO2 + H2O. Inhibited by acetazolamide. Functionally, reversible hydration of carbon dioxide. The chain is Carbonic anhydrase 3 from Mus musculus (Mouse).